A 570-amino-acid polypeptide reads, in one-letter code: Endo-1,4-beta-xylanase 5-like (570 aa).

The signal sequence occupies residues 1–23; the sequence is MNSIKNGFFLCMIFLLWCHVDSG. 3 N-linked (GlcNAc...) asparagine glycosylation sites follow: N197, N261, and N307. The region spanning 202–501 is the GH10 domain; the sequence is KGVVISLKQT…TQTGDVIDKL (300 aa). The Proton donor role is filled by E332. N346 is a glycosylation site (N-linked (GlcNAc...) asparagine). The active-site Nucleophile is the E439. Residues N490, N515, N537, and N545 are each glycosylated (N-linked (GlcNAc...) asparagine).

It belongs to the glycosyl hydrolase 10 (cellulase F) family.

The enzyme catalyses Endohydrolysis of (1-&gt;4)-beta-D-xylosidic linkages in xylans.. The protein operates within glycan degradation; xylan degradation. Its function is as follows. Binds to and hydrolyzes insoluble and soluble xylan substrates. The sequence is that of Endo-1,4-beta-xylanase 5-like from Arabidopsis thaliana (Mouse-ear cress).